Consider the following 170-residue polypeptide: Putative 4-hydroxy-4-methyl-2-oxoglutarate aldolase (170 aa).

Substrate contacts are provided by residues glycine 85–isoleucine 88 and arginine 107. An a divalent metal cation-binding site is contributed by aspartate 108.

This sequence belongs to the class II aldolase/RraA-like family. In terms of assembly, homotrimer. It depends on a divalent metal cation as a cofactor.

The catalysed reaction is 4-hydroxy-4-methyl-2-oxoglutarate = 2 pyruvate. The enzyme catalyses oxaloacetate + H(+) = pyruvate + CO2. Functionally, catalyzes the aldol cleavage of 4-hydroxy-4-methyl-2-oxoglutarate (HMG) into 2 molecules of pyruvate. Also contains a secondary oxaloacetate (OAA) decarboxylase activity due to the common pyruvate enolate transition state formed following C-C bond cleavage in the retro-aldol and decarboxylation reactions. This Acinetobacter baylyi (strain ATCC 33305 / BD413 / ADP1) protein is Putative 4-hydroxy-4-methyl-2-oxoglutarate aldolase.